Reading from the N-terminus, the 724-residue chain is Protein Aster-A (724 aa).

Residues 1–18 (MFDTTPHSGRSTPSSSPS) are compositionally biased toward low complexity. Residues 1-66 (MFDTTPHSGR…TPSTQSLGSR (66 aa)) are disordered. Over residues 57-66 (TPSTQSLGSR) the composition is skewed to polar residues. The 68-residue stretch at 91-158 (EDFRKLFSKL…KEVTCLKKEK (68 aa)) folds into the GRAM domain. Residues 256 to 336 (SSGAADRSQE…GPTTLGPLDL (81 aa)) form a disordered region. Ser263, Ser267, and Ser271 each carry phosphoserine. Residues 300-312 (DSQPDASSSQTVT) show a composition bias toward polar residues. Over residues 326 to 336 (DGPTTLGPLDL) the composition is skewed to low complexity. Residues 367–538 (SGRLLINSVF…ELAKAEKLSL (172 aa)) enclose the VASt domain. Ser415 is subject to Phosphoserine. The disordered stretch occupies residues 560–579 (SWRAHGDGPQHPDPDPCARA). The segment covering 563-575 (AHGDGPQHPDPDP) has biased composition (basic and acidic residues). Residues 610 to 630 (LISIVICVSLIILIALNVLLF) form a helical membrane-spanning segment.

As to expression, expressed in liver.

Its subcellular location is the endoplasmic reticulum membrane. The protein resides in the cell membrane. It localises to the cytoplasmic vesicle. It is found in the autophagosome. Its function is as follows. Cholesterol transporter that mediates non-vesicular transport of cholesterol from the plasma membrane (PM) to the endoplasmic reticulum (ER). Contains unique domains for binding cholesterol and the PM, thereby serving as a molecular bridge for the transfer of cholesterol from the PM to the ER. Plays a crucial role in cholesterol homeostasis and has the unique ability to localize to the PM based on the level of membrane cholesterol. In lipid-poor conditions localizes to the ER membrane and in response to excess cholesterol in the PM is recruited to the endoplasmic reticulum-plasma membrane contact sites (EPCS) which is mediated by the GRAM domain. At the EPCS, the sterol-binding VASt/ASTER domain binds to the cholesterol in the PM and facilitates its transfer from the PM to ER. May play a role in tumor progression. Plays a role in autophagy regulation and is required for biogenesis of the autophagosome. This function in autophagy requires its cholesterol-transfer activity. The polypeptide is Protein Aster-A (Homo sapiens (Human)).